The following is a 1307-amino-acid chain: CRISPR-associated endonuclease Cas12a (1307 aa).

A WED-I (OBD-I) region spans residues 1 to 35 (MTQFEGFTNLYQVSKTLRFELIPQGKTLKHIQEQG). The tract at residues 36-320 (FIEEDKARND…SDRNTLSFIL (285 aa)) is REC1 (helical-I). Position 47-51 (47-51 (YKELK)) interacts with crRNA. Residues 74-106 (ENLSAAIDSYRKEKTEETRNALIEEQATYRNAI) adopt a coiled-coil conformation. CrRNA contacts are provided by residues 175–176 (NR) and 307–310 (KQIL). The interval 321-526 (EEFKSDEEVI…ARNYATKKPY (206 aa)) is WED-II (helical-II). A WED-II (OBD-I) region spans residues 527-598 (SVEKFKLNFQ…GFDKMYYDYF (72 aa)). A DNA-binding region (PAM-binding on target DNA) is located at residues 599–607 (PDAAKMIPK). The segment at 599–718 (PDAAKMIPKC…EYYAELNPLL (120 aa)) is PI (LHD). A WED-III (OBD-III) region spans residues 719-884 (YHISFQRIAE…ITLNYQAANS (166 aa)). Residue 752–761 (KGHHGKPNLH) coordinates crRNA. Positions 780-783 (KLNG) form a DNA-binding region, target DNA. His800 serves as the catalytic For pre-crRNA processing. 806-808 (MLN) provides a ligand contact to crRNA. Residues Lys809 and Lys860 each act as for pre-crRNA processing in the active site. The ruvC-I stretch occupies residues 885–940 (PSKFNQRVNAYLKEHPETPIIGIDRGERNLIYITVIDSTGKILEQRSLNTIQQFDY). The active-site For DNase activity of RuvC domain is the Asp908. The interval 941–957 (QKKLDNREKERVAARQA) is bridge helix. The target DNA DNA-binding region spans 951 to 968 (RVAARQAWSVVGTIKDLK). The tract at residues 958-1066 (WSVVGTIKDL…TQSGFLFYVP (109 aa)) is ruvC-II. Residue Glu993 is the For DNase activity of RuvC domain of the active site. A DNA-binding region (target DNA) is located at residues 1051–1053 (SFA). The nuclease domain stretch occupies residues 1067–1262 (APYTSKIDPL…FQNPEWPMDA (196 aa)). The For DNase activity of nuclease domain role is filled by Arg1226. Asp1263 serves as the catalytic For DNase activity of RuvC domain. The segment at 1263–1307 (DANGAYHIALKGQLLLNHLKESKDLKLQNGISNQDWLAYIQELRN) is ruvC-III.

It belongs to the CRISPR-associated endonuclease Cas12a family. Monomer. Mg(2+) serves as cofactor.

It carries out the reaction Endonucleolytic cleavage to 5'-phosphodinucleotide and 5'-phosphooligonucleotide end-products.. It catalyses the reaction RNA = a 5'-hydroxy-ribonucleotide + n nucleoside-2',3'-cyclophosphates.. Its function is as follows. CRISPR (clustered regularly interspaced short palindromic repeat), is an adaptive immune system that provides protection against mobile genetic elements (viruses, transposable elements and conjugative plasmids). CRISPR clusters contain sequences complementary to antecedent mobile elements and target invading nucleic acids. CRISPR clusters are transcribed and processed into CRISPR RNA (crRNA). Recognizes a short motif in the CRISPR repeat sequences (the 5' PAM or protospacer adjacent motif, TTTN in this organism) to help distinguish self versus nonself, as targets within the bacterial CRISPR locus do not have PAMs. Has dsDNA endonuclease activity, results in staggered 4-base 5' overhangs 19 and 22 bases downstream of the PAM on the non-targeted and targeted strand respectively. Non-target strand cleavage by the RuvC domain is probably a prerequisite of target strand cleavage by the Nuc domain. Protects E.coli against plasmids and bacteriophage M13mp18, phage T4 with hydroxymethyl or unmodified (but not glycosylated) cytosines and to a lesser extent against lambda and VpaE1 phage. In this CRISPR system correct processing of pre-crRNA requires only this protein and the CRISPR locus. This is CRISPR-associated endonuclease Cas12a from Acidaminococcus sp. (strain BV3L6).